Reading from the N-terminus, the 127-residue chain is Putative pre-16S rRNA nuclease (127 aa).

The protein belongs to the YqgF nuclease family.

The protein resides in the cytoplasm. In terms of biological role, could be a nuclease involved in processing of the 5'-end of pre-16S rRNA. This is Putative pre-16S rRNA nuclease from Campylobacter jejuni subsp. jejuni serotype O:23/36 (strain 81-176).